The chain runs to 76 residues: UPF0248 protein MMP0286 (76 aa).

It belongs to the UPF0248 family.

The sequence is that of UPF0248 protein MMP0286 from Methanococcus maripaludis (strain DSM 14266 / JCM 13030 / NBRC 101832 / S2 / LL).